A 525-amino-acid polypeptide reads, in one-letter code: Bifunctional purine biosynthesis protein PurH (525 aa).

One can recognise an MGS-like domain in the interval 1-149 (MSDPVIKRAL…KNNESVTVVT (149 aa)).

The protein belongs to the PurH family.

The enzyme catalyses (6R)-10-formyltetrahydrofolate + 5-amino-1-(5-phospho-beta-D-ribosyl)imidazole-4-carboxamide = 5-formamido-1-(5-phospho-D-ribosyl)imidazole-4-carboxamide + (6S)-5,6,7,8-tetrahydrofolate. The catalysed reaction is IMP + H2O = 5-formamido-1-(5-phospho-D-ribosyl)imidazole-4-carboxamide. It participates in purine metabolism; IMP biosynthesis via de novo pathway; 5-formamido-1-(5-phospho-D-ribosyl)imidazole-4-carboxamide from 5-amino-1-(5-phospho-D-ribosyl)imidazole-4-carboxamide (10-formyl THF route): step 1/1. Its pathway is purine metabolism; IMP biosynthesis via de novo pathway; IMP from 5-formamido-1-(5-phospho-D-ribosyl)imidazole-4-carboxamide: step 1/1. This chain is Bifunctional purine biosynthesis protein PurH, found in Pelodictyon phaeoclathratiforme (strain DSM 5477 / BU-1).